Consider the following 183-residue polypeptide: Peptidyl-tRNA hydrolase (183 aa).

Tyr-14 provides a ligand contact to tRNA. The Proton acceptor role is filled by His-19. TRNA-binding residues include Tyr-55 and Asn-57.

It belongs to the PTH family. In terms of assembly, monomer.

Its subcellular location is the cytoplasm. The enzyme catalyses an N-acyl-L-alpha-aminoacyl-tRNA + H2O = an N-acyl-L-amino acid + a tRNA + H(+). In terms of biological role, hydrolyzes ribosome-free peptidyl-tRNAs (with 1 or more amino acids incorporated), which drop off the ribosome during protein synthesis, or as a result of ribosome stalling. Its function is as follows. Catalyzes the release of premature peptidyl moieties from peptidyl-tRNA molecules trapped in stalled 50S ribosomal subunits, and thus maintains levels of free tRNAs and 50S ribosomes. The protein is Peptidyl-tRNA hydrolase of Thermus thermophilus (strain ATCC BAA-163 / DSM 7039 / HB27).